Here is a 147-residue protein sequence, read N- to C-terminus: Large ribosomal subunit protein uL11 (147 aa).

Belongs to the universal ribosomal protein uL11 family. Part of the ribosomal stalk of the 50S ribosomal subunit. Interacts with L10 and the large rRNA to form the base of the stalk. L10 forms an elongated spine to which L12 dimers bind in a sequential fashion forming a multimeric L10(L12)X complex. In terms of processing, one or more lysine residues are methylated.

Functionally, forms part of the ribosomal stalk which helps the ribosome interact with GTP-bound translation factors. In Phocaeicola vulgatus (strain ATCC 8482 / DSM 1447 / JCM 5826 / CCUG 4940 / NBRC 14291 / NCTC 11154) (Bacteroides vulgatus), this protein is Large ribosomal subunit protein uL11.